The following is a 262-amino-acid chain: Tryptophan synthase alpha chain (262 aa).

Active-site proton acceptor residues include Glu48 and Asp59.

This sequence belongs to the TrpA family. As to quaternary structure, tetramer of two alpha and two beta chains.

The catalysed reaction is (1S,2R)-1-C-(indol-3-yl)glycerol 3-phosphate + L-serine = D-glyceraldehyde 3-phosphate + L-tryptophan + H2O. It functions in the pathway amino-acid biosynthesis; L-tryptophan biosynthesis; L-tryptophan from chorismate: step 5/5. In terms of biological role, the alpha subunit is responsible for the aldol cleavage of indoleglycerol phosphate to indole and glyceraldehyde 3-phosphate. In Helicobacter pylori (strain ATCC 700392 / 26695) (Campylobacter pylori), this protein is Tryptophan synthase alpha chain.